Reading from the N-terminus, the 243-residue chain is Transcription factor A, mitochondrial (243 aa).

The N-terminal 42 residues, 1–42 (MALFRGMWSVLKALGRTGVEMCAGCGGRIPSSISLVCIPKCF), are a transit peptide targeting the mitochondrion. Residues 49-117 (PKKPMSSYLR…AYKEAVSKYK (69 aa)) constitute a DNA-binding region (HMG box 1). 3 positions are modified to phosphoserine; by PKA: serine 54, serine 55, and serine 60. The residue at position 66 (lysine 66) is an N6-succinyllysine. Threonine 121 carries the phosphothreonine modification. A DNA-binding region (HMG box 2) is located at residues 154–218 (PKRPRSAYNI…RYDNEMKSWE (65 aa)). Residue serine 159 is modified to Phosphoserine; by PKA. Serine 192 is subject to Phosphoserine.

Monomer; binds DNA as a monomer. Homodimer. Component of the mitochondrial transcription initiation complex, composed at least of TFB2M, TFAM and POLRMT. In this complex TFAM recruits POLRMT to the promoter whereas TFB2M induces structural changes in POLRMT to enable promoter opening and trapping of the DNA non-template strand. Upon metabolic stress, forms a complex composed of FOXO3, SIRT3, TFAM and POLRMT. Interacts with TFB1M and TFB2M. Interacts with CLPX; this enhances DNA-binding. Post-translationally, phosphorylation by PKA within the HMG box 1 impairs DNA binding and promotes degradation by the AAA+ Lon protease. In terms of tissue distribution, the mitochondrial isoform is widely expressed while the nuclear isoform is testis-specific.

It localises to the mitochondrion. It is found in the mitochondrion matrix. The protein resides in the mitochondrion nucleoid. Its subcellular location is the nucleus. Its function is as follows. Binds to the mitochondrial light strand promoter and functions in mitochondrial transcription regulation. Component of the mitochondrial transcription initiation complex, composed at least of TFB2M, TFAM and POLRMT that is required for basal transcription of mitochondrial DNA. In this complex, TFAM recruits POLRMT to a specific promoter whereas TFB2M induces structural changes in POLRMT to enable promoter opening and trapping of the DNA non-template strand. Required for accurate and efficient promoter recognition by the mitochondrial RNA polymerase. Promotes transcription initiation from the HSP1 and the light strand promoter by binding immediately upstream of transcriptional start sites. Is able to unwind DNA. Bends the mitochondrial light strand promoter DNA into a U-turn shape via its HMG boxes. Required for maintenance of normal levels of mitochondrial DNA. May play a role in organizing and compacting mitochondrial DNA. In terms of biological role, may also function as a transcriptional activator or may have a structural role in the compaction of nuclear DNA during spermatogenesis. This is Transcription factor A, mitochondrial from Mus musculus (Mouse).